Reading from the N-terminus, the 1493-residue chain is Inactive serine/threonine-protein kinase TEX14 (1493 aa).

3 ANK repeats span residues 27-54 (LHEYVKQGNYVKVKRILKKGIYVDAVNS), 55-84 (LGQTALFIAALLGLTKLVDVLVDYGADPNH), and 88-117 (DGSTPVHAAAFSGNQWILSKLLDAGGDLRL). The region spanning 198-511 (VISAQNIYSF…IMKNDLKDFI (314 aa)) is the Protein kinase domain. Residues 204-212 (IYSFGFGKF) and K266 contribute to the ATP site. S430 carries the phosphoserine; by PLK1 modification. The span at 559 to 573 (GSQFHSPRGHSSPTG) shows a compositional bias: polar residues. Residues 559–615 (GSQFHSPRGHSSPTGKATPEPPVPDVSPVAQQTHRQDAASPACSVAEEARNPSPDQT) form a disordered region. A phosphoserine mark is found at S560 and S660. Disordered stretches follow at residues 782–904 (HDSP…RISM) and 940–1081 (AATG…LTPD). Residues 789–795 (GPPASSY) carry the GPPX3Y motif. Residues 846-854 (KASLERDRN) carry the D-box motif. Composition is skewed to polar residues over residues 855 to 904 (QNTS…RISM) and 1001 to 1020 (CGQTDSSDQRGRQSGPQRFT). Residues 1026–1037 (PPREDEQPEHSE) are compositionally biased toward basic and acidic residues. A compositionally biased stretch (polar residues) spans 1053-1064 (YSGQSAQSTCSP). Over residues 1066–1075 (SSEDTEDMTD) the composition is skewed to acidic residues. Position 1100 is a phosphoserine (S1100). Residues 1115-1167 (RPQASGEEKFQMRKNLGKNSEILTKSQFQPIRSPEGEQDETLKEPPKEVKEKD) are disordered. The segment covering 1131-1144 (GKNSEILTKSQFQP) has biased composition (polar residues). The segment covering 1154–1167 (ETLKEPPKEVKEKD) has biased composition (basic and acidic residues). S1262 bears the Phosphoserine mark. Disordered stretches follow at residues 1288 to 1307 (GAGSSSIAKAPDTSRCATQR) and 1341 to 1466 (KGQQ…EEEE). Over residues 1343-1362 (QQVSSTALDENTASRPGSTE) the composition is skewed to polar residues. Residues 1363 to 1380 (NDQRHLEEQETHSNKEDS) show a composition bias toward basic and acidic residues. S1400 is subject to Phosphoserine. The segment covering 1426-1456 (PAREASSKDQEVGEKKRKGEESTKPEKRKPE) has biased composition (basic and acidic residues). S1492 carries the phosphoserine modification.

The protein belongs to the protein kinase superfamily. As to quaternary structure, interacts with KIF23 and RBM44. Interacts with CEP55; inhibiting interaction between CEP55 and PDCD6IP/ALIX and TSG101. Phosphorylated on Thr residues by CDK1 during early phases of mitosis, promoting the interaction with PLK1 and recruitment to kinetochores. Phosphorylated on Ser-430 by PLK1 during late prometaphase promotes the rapid depletion from kinetochores and its subsequent degradation by the APC/C complex.

Its subcellular location is the cytoplasm. The protein resides in the midbody. The protein localises to the chromosome. It localises to the centromere. It is found in the kinetochore. Its function is as follows. Required both for the formation of intercellular bridges during meiosis and for kinetochore-microtubule attachment during mitosis. Intercellular bridges are evolutionarily conserved structures that connect differentiating germ cells and are required for spermatogenesis and male fertility. Acts by promoting the conversion of midbodies into intercellular bridges via its interaction with CEP55: interaction with CEP55 inhibits the interaction between CEP55 and PDCD6IP/ALIX and TSG101, blocking cell abscission and leading to transform midbodies into intercellular bridges. Also plays a role during mitosis: recruited to kinetochores by PLK1 during early mitosis and regulates the maturation of the outer kinetochores and microtubule attachment. Has no protein kinase activity in vitro. This Bos taurus (Bovine) protein is Inactive serine/threonine-protein kinase TEX14 (TEX14).